A 233-amino-acid chain; its full sequence is Rab-like protein 3 (233 aa).

The segment at 1-233 is small GTPase-like; the sequence is MASLDRVKVL…RFNFKSLHSD (233 aa). Residues 16–21, 148–150, and 179–180 contribute to the GTP site; these read GVGKSS, KFD, and DC.

This sequence belongs to the small GTPase superfamily. Rab family. Homodimer.

In terms of biological role, required for KRAS signaling regulation and modulation of cell proliferation. Regulator of KRAS prenylation, and probably prenylation of other small GTPases. Required for lymphocyte development and function. Not required for myeloid cell development. This is Rab-like protein 3 (rabl3) from Danio rerio (Zebrafish).